We begin with the raw amino-acid sequence, 238 residues long: uncharacterized protein (238 aa).

Positions 1 to 28 are cleaved as a signal peptide; it reads MSRNSRGSGRYVFVVLACVFGYTRAVHA.

This is an uncharacterized protein from Treponema pallidum (strain Nichols).